The chain runs to 156 residues: Small ribosomal subunit protein uS7 (156 aa).

Belongs to the universal ribosomal protein uS7 family. In terms of assembly, part of the 30S ribosomal subunit. Contacts proteins S9 and S11.

Its function is as follows. One of the primary rRNA binding proteins, it binds directly to 16S rRNA where it nucleates assembly of the head domain of the 30S subunit. Is located at the subunit interface close to the decoding center, probably blocks exit of the E-site tRNA. This chain is Small ribosomal subunit protein uS7, found in Frankia alni (strain DSM 45986 / CECT 9034 / ACN14a).